The primary structure comprises 227 residues: Urease accessory protein UreF (227 aa).

This sequence belongs to the UreF family. UreD, UreF and UreG form a complex that acts as a GTP-hydrolysis-dependent molecular chaperone, activating the urease apoprotein by helping to assemble the nickel containing metallocenter of UreC. The UreE protein probably delivers the nickel.

It localises to the cytoplasm. Its function is as follows. Required for maturation of urease via the functional incorporation of the urease nickel metallocenter. The chain is Urease accessory protein UreF from Actinobacillus pleuropneumoniae (Haemophilus pleuropneumoniae).